A 273-amino-acid polypeptide reads, in one-letter code: 3-methyl-2-oxobutanoate hydroxymethyltransferase (273 aa).

Residues aspartate 53 and aspartate 92 each contribute to the Mg(2+) site. Residues 53–54 (DS), aspartate 92, and lysine 120 contribute to the 3-methyl-2-oxobutanoate site. A Mg(2+)-binding site is contributed by glutamate 122. Glutamate 189 (proton acceptor) is an active-site residue.

The protein belongs to the PanB family. In terms of assembly, homodecamer; pentamer of dimers. The cofactor is Mg(2+).

It is found in the cytoplasm. It catalyses the reaction 3-methyl-2-oxobutanoate + (6R)-5,10-methylene-5,6,7,8-tetrahydrofolate + H2O = 2-dehydropantoate + (6S)-5,6,7,8-tetrahydrofolate. The protein operates within cofactor biosynthesis; (R)-pantothenate biosynthesis; (R)-pantoate from 3-methyl-2-oxobutanoate: step 1/2. Functionally, catalyzes the reversible reaction in which hydroxymethyl group from 5,10-methylenetetrahydrofolate is transferred onto alpha-ketoisovalerate to form ketopantoate. The protein is 3-methyl-2-oxobutanoate hydroxymethyltransferase of Cupriavidus necator (strain ATCC 17699 / DSM 428 / KCTC 22496 / NCIMB 10442 / H16 / Stanier 337) (Ralstonia eutropha).